The chain runs to 435 residues: F-box only protein 9 (435 aa).

The segment at 1 to 25 is disordered; sequence MAEAEEDCHSDAVRVGDEGHESPAE. Positions 7 to 25 are enriched in basic and acidic residues; the sequence is DCHSDAVRVGDEGHESPAE. The TPR repeat unit spans residues 82 to 115; it reads ARELFLKAVEEEQNGALYEAIKFYRRAMQLVPDI. S124 bears the Phosphoserine mark. Residues 173 to 224 form the F-box domain; the sequence is QTHISVLPMEVLMYIFRWVVSSDLDLRSLEQLSLVCRGFYICARDPEIWRLA.

In terms of assembly, part of the SCF (SKP1-CUL1-F-box) E3 ubiquitin-protein ligase complex SCF(FBXO9) composed of CUL1, SKP1, RBX1 and FBXO9. Interacts with TTI1 and TELO2; when TTI1 and TELO2 are phosphorylated by CK2.

The protein resides in the cytoplasm. It participates in protein modification; protein ubiquitination. Substrate recognition component of a SCF (SKP1-CUL1-F-box protein) E3 ubiquitin-protein ligase complex which mediates the ubiquitination and subsequent proteasomal degradation of target proteins and plays a role in several biological processes such as cell cycle, cell proliferation, or maintenance of chromosome stability. Ubiquitinates mTORC1-bound TTI1 and TELO2 when they are phosphorylated by CK2 following growth factor deprivation, leading to their degradation. In contrast, does not mediate ubiquitination of TTI1 and TELO2 when they are part of the mTORC2 complex. As a consequence, mTORC1 is inactivated to restrain cell growth and protein translation, while mTORC2 is the activated due to the relief of feedback inhibition by mTORC1. Plays a role in maintaining epithelial cell survival by regulating the turn-over of chromatin modulator PRMT4 through ubiquitination and degradation by the proteasomal pathway. Also regulates PPARgamma stability by facilitating PPARgamma/PPARG ubiquitination and thereby plays a role in adipocyte differentiation. The chain is F-box only protein 9 (Fbxo9) from Rattus norvegicus (Rat).